The primary structure comprises 115 residues: Putative type I restriction enzyme MpnIIP endonuclease subunit middle part (115 aa).

Its function is as follows. The middle section of a putative type I restriction enzyme that if reconstituted might recognize 5'-GAN(7)TAY-3' and cleave a random distance away. Subunit R is required for both nuclease and ATPase activities, but not for modification. This chain is Putative type I restriction enzyme MpnIIP endonuclease subunit middle part, found in Mycoplasma pneumoniae (strain ATCC 29342 / M129 / Subtype 1) (Mycoplasmoides pneumoniae).